A 107-amino-acid chain; its full sequence is Large ribosomal subunit protein eL33B (107 aa).

The residue at position 2 (A2) is an N-acetylalanine; partial. K47 is covalently cross-linked (Glycyl lysine isopeptide (Lys-Gly) (interchain with G-Cter in ubiquitin)).

It belongs to the eukaryotic ribosomal protein eL33 family. In terms of assembly, component of the large ribosomal subunit (LSU). Mature yeast ribosomes consist of a small (40S) and a large (60S) subunit. The 40S small subunit contains 1 molecule of ribosomal RNA (18S rRNA) and 33 different proteins (encoded by 57 genes). The large 60S subunit contains 3 rRNA molecules (25S, 5.8S and 5S rRNA) and 46 different proteins (encoded by 81 genes). In terms of processing, N-terminally acetylated by acetyltransferase NatA.

It is found in the cytoplasm. In terms of biological role, component of the ribosome, a large ribonucleoprotein complex responsible for the synthesis of proteins in the cell. The small ribosomal subunit (SSU) binds messenger RNAs (mRNAs) and translates the encoded message by selecting cognate aminoacyl-transfer RNA (tRNA) molecules. The large subunit (LSU) contains the ribosomal catalytic site termed the peptidyl transferase center (PTC), which catalyzes the formation of peptide bonds, thereby polymerizing the amino acids delivered by tRNAs into a polypeptide chain. The nascent polypeptides leave the ribosome through a tunnel in the LSU and interact with protein factors that function in enzymatic processing, targeting, and the membrane insertion of nascent chains at the exit of the ribosomal tunnel. The sequence is that of Large ribosomal subunit protein eL33B from Saccharomyces cerevisiae (strain ATCC 204508 / S288c) (Baker's yeast).